Reading from the N-terminus, the 412-residue chain is MNDLIINHIAELILPRSTDKPLKGKELDELNVVKNGTVVIKDGKIVYAGTHTDDYDATETIDASGKVVSPALVDAHTHLTFGGSREHEMSLKRQGKSYLEILEMGGGILSTVNATRETSEDDLFKKAEHDLLTMIKHGVLAVESKSGYGLDRENELKQLKVSNRLAEKYDLDMKHTFLGPHAVPKEASSNEAFLEEMIALLPEVKHYADFADIFCETGVFTIEQSQHYMQKAKEAGFKVKIHADEIDPLGGLELAIDEQAISADHLVASSDKGKEKLRNSDTVAVLLPATTLYLGKEDYADARGMLDNNGAIALATDYNPGSSVTNNIQLVMAIAALKLKLSPNEVWNAVTVNAAKAIDINAGTINTGDKANLVIWDAPNHEYIPYHFGINHAEKVIKDGKVIVDNTLSFKV.

Fe(3+) contacts are provided by histidine 76 and histidine 78. Positions 76 and 78 each coordinate Zn(2+). 4-imidazolone-5-propanoate contacts are provided by arginine 85, tyrosine 148, and histidine 181. Tyrosine 148 contacts N-formimidoyl-L-glutamate. Histidine 242 serves as a coordination point for Fe(3+). Residue histidine 242 coordinates Zn(2+). Residue glutamate 245 participates in 4-imidazolone-5-propanoate binding. Aspartate 317 contacts Fe(3+). Aspartate 317 is a binding site for Zn(2+). Residues asparagine 319 and glycine 321 each contribute to the N-formimidoyl-L-glutamate site. Residue serine 322 coordinates 4-imidazolone-5-propanoate.

Belongs to the metallo-dependent hydrolases superfamily. HutI family. Requires Zn(2+) as cofactor. Fe(3+) is required as a cofactor.

It is found in the cytoplasm. The enzyme catalyses 4-imidazolone-5-propanoate + H2O = N-formimidoyl-L-glutamate. It functions in the pathway amino-acid degradation; L-histidine degradation into L-glutamate; N-formimidoyl-L-glutamate from L-histidine: step 3/3. Catalyzes the hydrolytic cleavage of the carbon-nitrogen bond in imidazolone-5-propanoate to yield N-formimidoyl-L-glutamate. It is the third step in the universal histidine degradation pathway. The polypeptide is Imidazolonepropionase (Staphylococcus aureus (strain MRSA252)).